Here is a 959-residue protein sequence, read N- to C-terminus: ATP-dependent 6-phosphofructokinase subunit beta (959 aa).

The tract at residues 2–573 (TVTTPFVNGT…HLNNFMAINS (572 aa)) is N-terminal catalytic PFK domain 1. The disordered stretch occupies residues 144–167 (KNAVSTKPTPPPAPEASAESGLSS). The residue at position 152 (Thr152) is a Phosphothreonine. Over residues 158–167 (EASAESGLSS) the composition is skewed to low complexity. Ser163 and Ser171 each carry phosphoserine. ATP contacts are provided by residues Gly206, 270–271 (RC), and 300–303 (GDGS). Position 301 (Asp301) interacts with Mg(2+). Residues 346–348 (SID), Arg383, 390–392 (MGR), Glu447, Arg475, and 481–484 (HVQR) each bind beta-D-fructose 6-phosphate. Residue Asp348 is the Proton acceptor of the active site. The tract at residues 574–587 (ADHNEPKLPKDKRL) is interdomain linker. Positions 588-959 (KIAIVNVGAP…DHLVGRKRVD (372 aa)) are C-terminal regulatory PFK domain 2. Beta-D-fructose 2,6-bisphosphate contacts are provided by residues Arg658, 716 to 720 (TLSNN), Arg754, and 761 to 763 (QGG). Residue Ser803 is modified to Phosphoserine. Residues Lys847, 853–856 (HVQQ), and Arg935 contribute to the beta-D-fructose 2,6-bisphosphate site.

It belongs to the phosphofructokinase type A (PFKA) family. ATP-dependent PFK group I subfamily. Eukaryotic two domain clade 'E' sub-subfamily. In terms of assembly, heterooctamer of 4 alpha and 4 beta chains. Mg(2+) is required as a cofactor.

The protein localises to the cytoplasm. It localises to the mitochondrion outer membrane. It carries out the reaction beta-D-fructose 6-phosphate + ATP = beta-D-fructose 1,6-bisphosphate + ADP + H(+). It functions in the pathway carbohydrate degradation; glycolysis; D-glyceraldehyde 3-phosphate and glycerone phosphate from D-glucose: step 3/4. With respect to regulation, allosterically activated by ADP, AMP, or fructose 2,6-bisphosphate, and allosterically inhibited by ATP or citrate. Catalyzes the phosphorylation of D-fructose 6-phosphate to fructose 1,6-bisphosphate by ATP, the first committing step of glycolysis. This chain is ATP-dependent 6-phosphofructokinase subunit beta (PFK2), found in Saccharomyces cerevisiae (strain ATCC 204508 / S288c) (Baker's yeast).